We begin with the raw amino-acid sequence, 313 residues long: Protein FixB (313 aa).

FAD is bound at residue 255-283 (LYLAVGISGQIQHMVGANASQTIFAINKD).

This sequence belongs to the ETF alpha-subunit/FixB family. Heterodimer of FixA and FixB.

Its pathway is amine and polyamine metabolism; carnitine metabolism. In terms of biological role, required for anaerobic carnitine reduction. May bring reductant to CaiA. The sequence is that of Protein FixB from Escherichia coli O157:H7.